Consider the following 404-residue polypeptide: MKLPIYLDYAATTPVDPRVAEKMMQYMTMDGIFGNPASRSHRYGWQAEEAVDIARNQVAELINADPREIVFTSGATESDNLAIKGVAHFYHKKGKHIITSKTEHKAVLDTCRQLEREGFEVTYLEPESNGIIPIEKLEAAMREDTILLSLMHVNNEIGVIHDIDAIGELCRAKKVIFHVDAAQSAGKLPIDLQKSKVDLMSISAHKMYGPKGIGALYVRRKPRIRLEATMHGGGHERGMRSGTLATHQIVGMGEAAAIAKADMESDNARIRRLRDRLWDGIKHIEETYINGDAEQRYCGSLNVSFNFVEGESLMMALKDLAVSSGSACTSASLEPSYVLRALGLDDEMAHSSIRFSIGRFTTEEEIDHAIETITKSIGQLREMSPLWEMFKDGVDLSTVQWAHH.

Pyridoxal 5'-phosphate is bound by residues 75–76 (AT), asparagine 155, glutamine 183, and 203–205 (SAH). Lysine 206 is modified (N6-(pyridoxal phosphate)lysine). Position 243 (threonine 243) interacts with pyridoxal 5'-phosphate. Residue cysteine 328 is the Cysteine persulfide intermediate of the active site. Cysteine 328 provides a ligand contact to [2Fe-2S] cluster.

The protein belongs to the class-V pyridoxal-phosphate-dependent aminotransferase family. NifS/IscS subfamily. As to quaternary structure, homodimer. Forms a heterotetramer with IscU, interacts with other sulfur acceptors. The cofactor is pyridoxal 5'-phosphate.

It localises to the cytoplasm. The catalysed reaction is (sulfur carrier)-H + L-cysteine = (sulfur carrier)-SH + L-alanine. Its pathway is cofactor biosynthesis; iron-sulfur cluster biosynthesis. In terms of biological role, master enzyme that delivers sulfur to a number of partners involved in Fe-S cluster assembly, tRNA modification or cofactor biosynthesis. Catalyzes the removal of elemental sulfur atoms from cysteine to produce alanine. Functions as a sulfur delivery protein for Fe-S cluster synthesis onto IscU, an Fe-S scaffold assembly protein, as well as other S acceptor proteins. In Shewanella loihica (strain ATCC BAA-1088 / PV-4), this protein is Cysteine desulfurase IscS.